A 417-amino-acid chain; its full sequence is Acetyltransferase cdmC (417 aa).

Residue Asn64 is glycosylated (N-linked (GlcNAc...) asparagine). The next 3 membrane-spanning stretches (helical) occupy residues 308 to 328 (IPDGYIGPSLFYMSFVGGYLV), 357 to 377 (GIFWVATFLTVTTPWWIYPLL), and 389 to 409 (LVESVGMNNALAMIGVGAFIL).

Belongs to the wax synthase family.

The protein localises to the membrane. The enzyme catalyses chrodrimanin A + acetyl-CoA = chrodrimanin B + CoA. It participates in secondary metabolite biosynthesis; terpenoid biosynthesis. Functionally, acetyltransferase; part of the gene cluster that mediates the biosynthesis of chrodrimanin B, a meroterpenoid that acts as a potent blocker of insect GABA-gated chloride channels. The first step of the pathway is the biosynthesis of 6-hydroxymellein by the polyketide synthase cdmE. The prenyltransferase cdmH acts as a 6-hydroxymellein 5-farnesyltransferase and produces the hydrophobic metabolite verruculide C. The FAD-dependent monooxygenase cdmI further converts verruculide C into verruculide B. The terpene cyclase cdmG then produced the pentacyclic molecule 3-hydroxypentacecilide A, the backbone structure of chrodrimanin B, via folding the farnesyl moiety of the substrate into the chair-boat conformation. The short-chain dehydrogenase/reductase cdmF functions as the 3-OH dehydrogenase that oxidizes the C-3 hydroxyl group of 3-hydroxypentacecilide A and produces chrodrimanin C, the dehydrogenated product of 3-hydroxypentacecilide A. The cytochrome P450 monooxygenase cdmJ then accepts both 3-hydroxypentacecilide A and chrodrimanin C and functions as a C-7-beta-hydroxylase to produce respectively chrodrimanin H and chrodrimanin F. The dioxygenase cdmA accepts chrodrimanin H to afford chrodrimanin E, which is further transformed to chrodrimanin A by the dioxygenase cdmD. CdmA can also accept chrodrimanin C as substrate to convert it into verruculide A, which is further converted into chrodrimanin T by cdmD. The last step of the biosynthesis is proposed to be performed by the acetyltransferase cdmC which acetylates chrodrimanin A to yield chrodrimanin B. The pathway may also lead to the production of additional shunt products, including chrodrimanins T and U. This chain is Acetyltransferase cdmC, found in Talaromyces verruculosus (Penicillium verruculosum).